We begin with the raw amino-acid sequence, 267 residues long: Ribosomal RNA small subunit methyltransferase NEP1 (267 aa).

The disordered stretch occupies residues 1–46; the sequence is MSELKNGTTEPKKNETTQSDSKSKSTSTNKSSVPPASLVPVQPTAL. Over residues 16–32 the composition is skewed to low complexity; that stretch reads TTQSDSKSKSTSTNKSS. S-adenosyl-L-methionine-binding positions include Leu195, Gly222, 227–229, and 242–247; these read GKD and LSDYPL.

The protein belongs to the class IV-like SAM-binding methyltransferase superfamily. RNA methyltransferase NEP1 family. As to quaternary structure, homodimer.

It is found in the nucleus. The protein localises to the nucleolus. It carries out the reaction a pseudouridine in rRNA + S-adenosyl-L-methionine = an N(1)-methylpseudouridine in rRNA + S-adenosyl-L-homocysteine + H(+). In terms of biological role, S-adenosyl-L-methionine-dependent pseudouridine N(1)-methyltransferase that methylates the pseudouridine corresponding to position 1189 (Psi1189) in S.cerevisiae 18S rRNA. Involved the biosynthesis of the hypermodified N1-methyl-N3-(3-amino-3-carboxypropyl) pseudouridine (m1acp3-Psi) conserved in eukaryotic 18S rRNA. Also has an essential role in 40S ribosomal subunit biogenesis independent on its methyltransferase activity, facilitating the incorporation of ribosomal protein S19 during the formation of pre-ribosomes. The polypeptide is Ribosomal RNA small subunit methyltransferase NEP1 (Candida albicans (Yeast)).